The primary structure comprises 185 residues: Elongation factor P (185 aa).

Belongs to the elongation factor P family.

It localises to the cytoplasm. The protein operates within protein biosynthesis; polypeptide chain elongation. Involved in peptide bond synthesis. Stimulates efficient translation and peptide-bond synthesis on native or reconstituted 70S ribosomes in vitro. Probably functions indirectly by altering the affinity of the ribosome for aminoacyl-tRNA, thus increasing their reactivity as acceptors for peptidyl transferase. The chain is Elongation factor P from Bacillus cytotoxicus (strain DSM 22905 / CIP 110041 / 391-98 / NVH 391-98).